We begin with the raw amino-acid sequence, 358 residues long: MGAWRNTRFIRSLSSVKRYRARFSYYSLFGGEPRACMAEKRSRSPLPAQRQIHVHNRQQEAQLLQSAKNVIPSLEETFHKGVAGRIGVIGGCQEYTGAPYFAAISALKTGADLSHVFCTSDSASVIKSYSPELIVHPLLDRTFAVNEISEWLSRLHCLVVGPGLGRNPTNLENAKRTIEKARKNKKHLVIDADGIAVVTTYPEIIKNYDSKKSKVILTPNVVEFDRLYTSVMGKAADPHGDSYEQARSLSQELGNVTICRKGQHDIITDGQTVVECSITGSNRRCGGQGDLLSGSMAVFLHWANIEVTQNPALVAAYAASGLTRWCNRLAYSRLKRSMTTSDMIQQIHQAFEELFGKE.

The region spanning L63 to L354 is the YjeF C-terminal domain. Residues G163 and N220 to R226 contribute to the (6S)-NADPHX site. Residues K261–D265 and G280–G289 each bind ATP. D290 provides a ligand contact to (6S)-NADPHX.

It belongs to the NnrD/CARKD family. Requires Mg(2+) as cofactor.

It catalyses the reaction (6S)-NADHX + ATP = ADP + phosphate + NADH + H(+). It carries out the reaction (6S)-NADPHX + ATP = ADP + phosphate + NADPH + H(+). In terms of biological role, catalyzes the dehydration of the S-form of NAD(P)HX at the expense of ATP, which is converted to ADP. Together with NAD(P)HX epimerase, which catalyzes the epimerization of the S- and R-forms, the enzyme allows the repair of both epimers of NAD(P)HX, a damaged form of NAD(P)H that is a result of enzymatic or heat-dependent hydration. This Nematostella vectensis (Starlet sea anemone) protein is ATP-dependent (S)-NAD(P)H-hydrate dehydratase.